Consider the following 209-residue polypeptide: Ubiquitin-conjugating enzyme E2 S (209 aa).

A UBC core domain is found at 14–160 (QTIRQVMREL…ARMMTEIHAQ (147 aa)). Cysteine 98 serves as the catalytic Glycyl thioester intermediate. Residues 164-209 (CAAGAAGDSKDDDGPSTKKHAGLDKKLQDKKKEKLLKEKKRMLKRL) form a disordered region. The segment covering 171–199 (DSKDDDGPSTKKHAGLDKKLQDKKKEKLL) has biased composition (basic and acidic residues). Residues 200–209 (KEKKRMLKRL) are compositionally biased toward basic residues.

Belongs to the ubiquitin-conjugating enzyme family.

The catalysed reaction is S-ubiquitinyl-[E1 ubiquitin-activating enzyme]-L-cysteine + [E2 ubiquitin-conjugating enzyme]-L-cysteine = [E1 ubiquitin-activating enzyme]-L-cysteine + S-ubiquitinyl-[E2 ubiquitin-conjugating enzyme]-L-cysteine.. It participates in protein modification; protein ubiquitination. Its function is as follows. Catalyzes the covalent attachment of ubiquitin to other proteins. Acts as an essential factor of the anaphase promoting complex/cyclosome (APC/C), a cell cycle-regulated ubiquitin ligase that controls progression through mitosis. Acts by specifically elongating polyubiquitin chains initiated by the E2 enzyme vih/UbcH10 on APC/C substrates, enhancing the degradation of APC/C substrates by the proteasome and promoting mitotic exit. The chain is Ubiquitin-conjugating enzyme E2 S from Drosophila ananassae (Fruit fly).